Here is a 262-residue protein sequence, read N- to C-terminus: 5'-nucleotidase SurE (262 aa).

Residues aspartate 13, aspartate 14, serine 44, and asparagine 97 each contribute to the a divalent metal cation site.

It belongs to the SurE nucleotidase family. A divalent metal cation serves as cofactor.

It is found in the cytoplasm. The catalysed reaction is a ribonucleoside 5'-phosphate + H2O = a ribonucleoside + phosphate. In terms of biological role, nucleotidase that shows phosphatase activity on nucleoside 5'-monophosphates. This chain is 5'-nucleotidase SurE, found in Myxococcus xanthus (strain DK1622).